A 190-amino-acid polypeptide reads, in one-letter code: Putative 3-methyladenine DNA glycosylase (190 aa).

The protein belongs to the DNA glycosylase MPG family.

The polypeptide is Putative 3-methyladenine DNA glycosylase (Rubrobacter xylanophilus (strain DSM 9941 / JCM 11954 / NBRC 16129 / PRD-1)).